The following is a 348-amino-acid chain: uncharacterized protein (348 aa).

This is an uncharacterized protein from Aquifex aeolicus (strain VF5).